Here is a 392-residue protein sequence, read N- to C-terminus: Aryl-hydrocarbon-interacting protein-like 1 (392 aa).

One can recognise a PPIase FKBP-type domain in the interval 53 to 145 (RQVDQPMHII…DLDELQKEPQ (93 aa)). 3 TPR repeats span residues 178–211 (VPVLHGEGNRLFKLGRYEEASSKYQEAIICLRNL), 230–263 (NTLTLNYCQCLLKKEEYYEVLEHTSDILRHHPGI), and 264–297 (VKAYYVRARAHAEVWNEAEAKADLQKVLELEPSM). The interval 329-392 (QGATQPPAEP…PLSPGHSLQH (64 aa)) is disordered. 2 stretches are compositionally biased toward pro residues: residues 335-346 (PAEPPAQPPTAP) and 355-366 (PADPPAEPPTAP).

In terms of assembly, interacts with NUB1.

It localises to the cytoplasm. It is found in the nucleus. Its function is as follows. May be important in protein trafficking and/or protein folding and stabilization. This chain is Aryl-hydrocarbon-interacting protein-like 1 (AIPL1), found in Macaca mulatta (Rhesus macaque).